Reading from the N-terminus, the 433-residue chain is MSTSGCSSEKSDFQDSTEGEEEEDTQSENLCMREYVVIRDYMAADATQLSLCFGDKVLLLSAVTQDWWWVKHNGICGYVPASYLHDALNDQEDTEVDDPWQDEEYYGSYKTLKLHLEMLSDVPRTTAYKEVILRNSSSLCGKHILDLGCGTGIISFFCAKLAQPEAVYAVEASEIAEQTRRLVKQNGISNLVHVIRQRAEELQLPTKVDILVSEWMGTCLLFEFMLESVLQARDRWLKEDGVMWPSTACIHLVPCSASKEYANKVLFWDNPYQLDFSLLKPLAAKEFFARPKPDYVLQPEDCLSEPCILLHLNLKTLQLAELERMNSDFTFFVHTDGLLHGFTAWFSVQFQNLEEQGQLELNTGPFSPLTHWKHTLFMLDEPLQVQKGDKISGSVVFQRNSVWRRHMSVTLSWVINGKLTMQNVSQQWQAILA.

The segment at 1–27 is disordered; it reads MSTSGCSSEKSDFQDSTEGEEEEDTQS. Residues 15–26 show a composition bias toward acidic residues; sequence DSTEGEEEEDTQ. Residues 30–89 enclose the SH3 domain; sequence LCMREYVVIRDYMAADATQLSLCFGDKVLLLSAVTQDWWWVKHNGICGYVPASYLHDALN. Residues 102–416 enclose the SAM-dependent MTase PRMT-type domain; it reads DEEYYGSYKT…MSVTLSWVIN (315 aa). Residues histidine 115, arginine 124, glycine 148, glutamate 171, and glutamate 200 each coordinate S-adenosyl-L-methionine. Catalysis depends on residues glutamate 214 and glutamate 223.

This sequence belongs to the class I-like SAM-binding methyltransferase superfamily. Protein arginine N-methyltransferase family. As to quaternary structure, interacts with ctnnb1.

Its subcellular location is the cytoplasm. The protein resides in the nucleus. It carries out the reaction L-arginyl-[protein] + 2 S-adenosyl-L-methionine = N(omega),N(omega)-dimethyl-L-arginyl-[protein] + 2 S-adenosyl-L-homocysteine + 2 H(+). Functionally, arginine methyltransferase that methylates the guanidino nitrogens of arginyl residues in proteins such as histones. Involved in growth regulation. Involved in embryonic dorsal development. In Xenopus tropicalis (Western clawed frog), this protein is Protein arginine N-methyltransferase 2 (prmt2).